A 422-amino-acid chain; its full sequence is Platelet-activating factor acetylhydrolase (422 aa).

The signal sequence occupies residues 1-21; the sequence is MASLWVRARRVFMKSRASGFS. The active-site Nucleophile is the S266. The active-site Charge relay system is D289. N331 carries N-linked (GlcNAc...) asparagine glycosylation. The active-site Charge relay system is the H345.

It belongs to the AB hydrolase superfamily. Lipase family. In terms of tissue distribution, plasma.

The protein resides in the secreted. It localises to the extracellular space. The catalysed reaction is a 1-O-alkyl-2-acetyl-sn-glycero-3-phosphocholine + H2O = a 1-O-alkyl-sn-glycero-3-phosphocholine + acetate + H(+). In terms of biological role, modulates the action of platelet-activating factor (PAF) by hydrolyzing the sn-2 ester bond to yield the biologically inactive lyso-PAF. Has a specificity for substrates with a short residue at the sn-2 position. It is inactive against long-chain phospholipids. This Gallus gallus (Chicken) protein is Platelet-activating factor acetylhydrolase (PLA2G7).